The sequence spans 178 residues: Endoribonuclease YbeY (178 aa).

The Zn(2+) site is built by His118, His122, and His128. Positions 158–178 are disordered; the sequence is ADRQSEKDRRLLDKSRYFDEP.

It belongs to the endoribonuclease YbeY family. Zn(2+) serves as cofactor.

The protein resides in the cytoplasm. Its function is as follows. Single strand-specific metallo-endoribonuclease involved in late-stage 70S ribosome quality control and in maturation of the 3' terminus of the 16S rRNA. The protein is Endoribonuclease YbeY of Mycolicibacterium smegmatis (strain ATCC 700084 / mc(2)155) (Mycobacterium smegmatis).